Here is a 402-residue protein sequence, read N- to C-terminus: Endoplasmic reticulum junction formation protein lunapark-B (402 aa).

The Cytoplasmic segment spans residues 1–45 (MGAIISRWKTKPSTVELLESLDKDIKDLEEFRAKNQRLLKLWVGR). Residues 46–66 (LLFYSSALYLLTCLCVYYLYF) form a helical membrane-spanning segment. The Lumenal portion of the chain corresponds to 67 to 77 (PQQWGARLITA). A helical membrane pass occupies residues 78–98 (LPLLAFPALVLLLRKMLIFLF). Residues 99-402 (SKRTERNNDK…EEQKKEDESN (304 aa)) are Cytoplasmic-facing. Residues 100-128 (KRTERNNDKLEDLKTQKRKILEEVMETET) adopt a coiled-coil conformation. The tract at residues 142-240 (ESKKKAEAEA…PGPGSGMRPP (99 aa)) is disordered. A compositionally biased stretch (polar residues) spans 205–222 (SASTPAGASQAETPQQMM). The segment at 276–301 (CQQCFSHNGMALKEEFEFVAFRCAYC) adopts a C4-type; plays a role in ER morphology zinc-finger fold. The tract at residues 311 to 402 (RPQAPRLPEF…EEQKKEDESN (92 aa)) is disordered. Residues 321–330 (SFERRLRSES) show a composition bias toward basic and acidic residues. Acidic residues predominate over residues 341–352 (TPEDSDAPEDDM). Positions 385-402 (PHAEAEALEEQKKEDESN) are enriched in basic and acidic residues.

This sequence belongs to the lunapark family. As to quaternary structure, homodimer; homodimerization requires the C4-type zinc finger motif and decreases during mitosis in a phosphorylation-dependent manner. Phosphorylated. Phosphorylation occurs during interphase. Phosphorylation also occurs during mitosis; these phosphorylations reduce both its homodimerization and the ER three-way tubular junction formation.

Its subcellular location is the endoplasmic reticulum membrane. In terms of biological role, endoplasmic reticulum (ER)-shaping membrane protein that plays a role in determining ER morphology. Involved in the stabilization of nascent three-way ER tubular junctions within the ER network. May also play a role as a curvature-stabilizing protein within three-way ER tubular junction network. This Danio rerio (Zebrafish) protein is Endoplasmic reticulum junction formation protein lunapark-B (lnpkb).